Consider the following 371-residue polypeptide: MPHHYILTLFGLLPVATNISTWWNFGSMLLACLALQVLTGFFLAVHYTANINLAFSSIIHITRDVPYGWMMQNLHAIGASMFFICIYIHIARGLYYGSYLNKETWMSGITLLITLMATAFFGYVLPWGQMSFWAATVITNLLTAVPYLGTTLTTWLWGGFAINDPTLTRFFALHFILPFAIISMSSLHIILLHEEGSSNPLGTNPDIDKIPFHPYHSYKDLLFLTLMILFMLIIVSFFPDIFNDPDNFSKANPLVTPQHIKPEWYFLFAYGILRSIPNKLGGALALVMSIMILFIIPFTHTAHFRPMTFRPLSQLMFWTLVSTFITITWAATKPVEPPYIIISQVTATLYFIFFISMPLLGWIENKMTNTP.

The next 4 membrane-spanning stretches (helical) occupy residues 25–45, 69–90, 105–125, and 170–190; these read FGSMLLACLALQVLTGFFLAV, WMMQNLHAIGASMFFICIYIHI, WMSGITLLITLMATAFFGYVL, and FFALHFILPFAIISMSSLHII. Heme b-binding residues include His-75 and His-89. Heme b is bound by residues His-174 and His-188. An a ubiquinone-binding site is contributed by His-193. Transmembrane regions (helical) follow at residues 218–238, 280–300, 312–332, and 339–358; these read YKDLLFLTLMILFMLIIVSFF, LGGALALVMSIMILFIIPFTH, LSQLMFWTLVSTFITITWAAT, and YIIISQVTATLYFIFFISMP.

The protein belongs to the cytochrome b family. In terms of assembly, the cytochrome bc1 complex contains 3 respiratory subunits (MT-CYB, CYC1 and UQCRFS1), 2 core proteins (UQCRC1 and UQCRC2) and probably 6 low-molecular weight proteins. Heme b is required as a cofactor.

Its subcellular location is the mitochondrion inner membrane. Component of the ubiquinol-cytochrome c reductase complex (complex III or cytochrome b-c1 complex) that is part of the mitochondrial respiratory chain. The b-c1 complex mediates electron transfer from ubiquinol to cytochrome c. Contributes to the generation of a proton gradient across the mitochondrial membrane that is then used for ATP synthesis. In Python molurus (Indian python), this protein is Cytochrome b (MT-CYB).